The sequence spans 259 residues: Phosphate import ATP-binding protein PstB 1 (259 aa).

The 242-residue stretch at 13 to 254 folds into the ABC transporter domain; it reads IQVRGLEFFY…PSKTQTEDYI (242 aa). 45–52 is an ATP binding site; that stretch reads GPSGCGKS.

It belongs to the ABC transporter superfamily. Phosphate importer (TC 3.A.1.7) family. As to quaternary structure, the complex is composed of two ATP-binding proteins (PstB), two transmembrane proteins (PstC and PstA) and a solute-binding protein (PstS).

It is found in the cell inner membrane. The enzyme catalyses phosphate(out) + ATP + H2O = ADP + 2 phosphate(in) + H(+). Part of the ABC transporter complex PstSACB involved in phosphate import. Responsible for energy coupling to the transport system. The chain is Phosphate import ATP-binding protein PstB 1 from Pseudomonas savastanoi pv. phaseolicola (strain 1448A / Race 6) (Pseudomonas syringae pv. phaseolicola (strain 1448A / Race 6)).